The primary structure comprises 445 residues: tRNA modification GTPase MnmE (445 aa).

Arginine 24, glutamate 81, and lysine 121 together coordinate (6S)-5-formyl-5,6,7,8-tetrahydrofolate. Residues 218 to 369 (GLTVVIAGPP…LLEALVGFAR (152 aa)) enclose the TrmE-type G domain. Residues 228–233 (NAGKST), 247–253 (SPHAGTT), 272–275 (DTAG), and 350–352 (SAR) contribute to the GTP site. Residues serine 232 and threonine 253 each coordinate Mg(2+). Lysine 445 is a (6S)-5-formyl-5,6,7,8-tetrahydrofolate binding site.

Belongs to the TRAFAC class TrmE-Era-EngA-EngB-Septin-like GTPase superfamily. TrmE GTPase family. Homodimer. Heterotetramer of two MnmE and two MnmG subunits. It depends on K(+) as a cofactor.

It is found in the cytoplasm. Its function is as follows. Exhibits a very high intrinsic GTPase hydrolysis rate. Involved in the addition of a carboxymethylaminomethyl (cmnm) group at the wobble position (U34) of certain tRNAs, forming tRNA-cmnm(5)s(2)U34. This chain is tRNA modification GTPase MnmE, found in Bradyrhizobium sp. (strain BTAi1 / ATCC BAA-1182).